An 825-amino-acid polypeptide reads, in one-letter code: NT-3 growth factor receptor (825 aa).

Positions 1-31 (MDVSLCPAKCSFWRIFLLGSVWLDYVGSVLA) are cleaved as a signal peptide. Disulfide bonds link cysteine 32–cysteine 38 and cysteine 36–cysteine 45. Over 32–429 (CPANCVCSKT…TVTHKPEEDT (398 aa)) the chain is Extracellular. Residues asparagine 68, asparagine 72, and asparagine 79 are each glycosylated (N-linked (GlcNAc...) asparagine). LRR repeat units follow at residues 104–125 (GLQK…AFAK) and 128–149 (HLRY…LFQT). N-linked (GlcNAc...) asparagine glycosylation is found at asparagine 133 and asparagine 163. Positions 160–209 (NFFNCSCDIRWMQLWQEQGEARLNSQNLYCINADGSQLPLFRMNISQCDL) constitute an LRRCT domain. 2 cysteine pairs are disulfide-bonded: cysteine 164-cysteine 189 and cysteine 166-cysteine 207. 7 N-linked (GlcNAc...) asparagine glycosylation sites follow: asparagine 203, asparagine 218, asparagine 232, asparagine 259, asparagine 267, asparagine 272, and asparagine 294. Ig-like C2-type domains follow at residues 210–300 (PEIS…VALT) and 309–382 (SLEE…IAKN). Cysteine 231 and cysteine 284 are disulfide-bonded. Cysteine 320 and cysteine 362 are joined by a disulfide. 2 N-linked (GlcNAc...) asparagine glycosylation sites follow: asparagine 375 and asparagine 388. The helical transmembrane segment at 430 to 453 (FGVSIAVGLAAFACVLLVVLFIMI) threads the bilayer. Topologically, residues 454 to 825 (NKYGRRSKFG…ATPIYLDILG (372 aa)) are cytoplasmic. Serine 493 is subject to Phosphoserine. Tyrosine 516 carries the post-translational modification Phosphotyrosine; by autocatalysis. Residues 538 to 825 (IVLKRELGEG…ATPIYLDILG (288 aa)) enclose the Protein kinase domain. ATP is bound by residues 544-552 (LGEGAFGKV) and lysine 572. The Proton acceptor role is filled by aspartate 679. A phosphotyrosine; by autocatalysis mark is found at tyrosine 705, tyrosine 709, and tyrosine 710.

This sequence belongs to the protein kinase superfamily. Tyr protein kinase family. Insulin receptor subfamily. Exists in a dynamic equilibrium between monomeric (low affinity) and dimeric (high affinity) structures. Binds SH2B2. Interacts with SQSTM1 and KIDINS220. Interacts with PTPRS. Interacts with MAPK8IP3/JIP3. Post-translationally, ligand-mediated auto-phosphorylation.

The protein localises to the membrane. It carries out the reaction L-tyrosyl-[protein] + ATP = O-phospho-L-tyrosyl-[protein] + ADP + H(+). Functionally, receptor tyrosine kinase involved in nervous system and probably heart development. Upon binding of its ligand NTF3/neurotrophin-3, NTRK3 autophosphorylates and activates different signaling pathways, including the phosphatidylinositol 3-kinase/AKT and the MAPK pathways, that control cell survival and differentiation. The protein is NT-3 growth factor receptor (NTRK3) of Saimiri boliviensis boliviensis (Bolivian squirrel monkey).